We begin with the raw amino-acid sequence, 402 residues long: Multidrug resistance protein MdtH (402 aa).

Residues Met-1–Lys-12 lie on the Cytoplasmic side of the membrane. Residues Tyr-13 to Ile-33 form a helical membrane-spanning segment. Residues Ser-34–Glu-98 lie on the Periplasmic side of the membrane. The chain crosses the membrane as a helical span at residues Pro-99–Phe-116. The Cytoplasmic segment spans residues Asp-117–Ser-138. A helical transmembrane segment spans residues Leu-139–Leu-159. The Periplasmic segment spans residues Gln-160–Arg-164. Residues Leu-165–Leu-185 form a helical membrane-spanning segment. The Cytoplasmic segment spans residues Pro-186–Tyr-213. A helical transmembrane segment spans residues Val-214–Met-234. Over Val-235–Ala-243 the chain is Periplasmic. Residues Ala-244 to Ala-264 traverse the membrane as a helical segment. Residues Arg-265–Arg-276 lie on the Cytoplasmic side of the membrane. Residues Leu-277–Leu-297 form a helical membrane-spanning segment. Over Gln-298–Gln-299 the chain is Periplasmic. A helical transmembrane segment spans residues Leu-300–Thr-320. At Leu-321–Arg-339 the chain is on the cytoplasmic side. A helical transmembrane segment spans residues Leu-340–Gly-360. At Lys-361–Glu-367 the chain is on the periplasmic side. A helical membrane pass occupies residues Leu-368–Phe-388. Topologically, residues Ser-389–Ala-402 are cytoplasmic.

The protein belongs to the major facilitator superfamily. DHA1 family. MdtH (TC 2.A.1.2.21) subfamily.

Its subcellular location is the cell inner membrane. The polypeptide is Multidrug resistance protein MdtH (Salmonella agona (strain SL483)).